The chain runs to 906 residues: Serine-aspartate repeat-containing protein C (906 aa).

An N-terminal signal peptide occupies residues 1–50 (MNNKKTATNRKGMIPNRLNKFSIRKYSVGTASILVGTTLIFGLSGHEAKA). Residues 51–127 (AEHTNGELNQ…QPTKKNNDAT (77 aa)) are disordered. The ligand binding A region stretch occupies residues 51–486 (AEHTNGELNQ…GSSTANGDQK (436 aa)). Polar residues-rich tracts occupy residues 56–71 (GELN…PSEN) and 80–119 (RQQN…STQP). CNA-B domains follow at residues 487–597 (KYNL…YKTP) and 598–708 (KYSL…EEET). The tract at residues 669 to 881 (KQTGTNTTED…TGSENNGSNN (213 aa)) is disordered. Acidic residues-rich tracts occupy residues 676 to 686 (TEDDKDADGGE) and 703 to 845 (YFEE…DSDS). Residues 869–873 (LPETG) carry the LPXTG sorting signal motif. Thr-872 bears the Pentaglycyl murein peptidoglycan amidated threonine mark. Residues 873–906 (GSENNGSNNATLFGGLFAALGSLLLFGRRKKQNK) constitute a propeptide, removed by sortase.

It belongs to the serine-aspartate repeat-containing protein (SDr) family. In terms of assembly, homodimerizes; via N2-Domain. Interacts with host NRXN1; this interaction mediates bacterial attachment to host cells.

Its subcellular location is the secreted. It is found in the cell wall. Its function is as follows. Cell surface-associated calcium-binding protein which plays an important role in adhesion and pathogenesis. Mediates interactions with components of the extracellular matrix such as host NRXN1 to promote bacterial adhesion. In Staphylococcus aureus (strain MRSA252), this protein is Serine-aspartate repeat-containing protein C (sdrC).